A 139-amino-acid polypeptide reads, in one-letter code: D-ribose pyranase (139 aa).

H20 (proton donor) is an active-site residue. Substrate-binding positions include D28, H106, and 128-130 (YAN).

It belongs to the RbsD / FucU family. RbsD subfamily. In terms of assembly, homodecamer.

It is found in the cytoplasm. It carries out the reaction beta-D-ribopyranose = beta-D-ribofuranose. It functions in the pathway carbohydrate metabolism; D-ribose degradation; D-ribose 5-phosphate from beta-D-ribopyranose: step 1/2. Catalyzes the interconversion of beta-pyran and beta-furan forms of D-ribose. The chain is D-ribose pyranase from Aliivibrio fischeri (strain MJ11) (Vibrio fischeri).